Here is a 507-residue protein sequence, read N- to C-terminus: GMP synthase [glutamine-hydrolyzing] 1 (507 aa).

The Glutamine amidotransferase type-1 domain maps to 4–193 (KIIILDFGSQ…VVDVCGCKQD (190 aa)). The active-site Nucleophile is the Cys79. Active-site residues include His167 and Glu169. Residues 194 to 382 (WSPASFIEST…LGMPEHLITR (189 aa)) enclose the GMPS ATP-PPase domain. Position 221-227 (221-227 (SGGVDSS)) interacts with ATP.

In terms of assembly, homodimer.

The catalysed reaction is XMP + L-glutamine + ATP + H2O = GMP + L-glutamate + AMP + diphosphate + 2 H(+). It participates in purine metabolism; GMP biosynthesis; GMP from XMP (L-Gln route): step 1/1. Catalyzes the synthesis of GMP from XMP. The chain is GMP synthase [glutamine-hydrolyzing] 1 (guaA1) from Bacteroides thetaiotaomicron (strain ATCC 29148 / DSM 2079 / JCM 5827 / CCUG 10774 / NCTC 10582 / VPI-5482 / E50).